The following is a 256-amino-acid chain: L-tyrosine degradation gene cluster protein hmgX (256 aa).

This sequence belongs to the TTC36 family.

The protein localises to the cytoplasm. Functionally, part of the L-tyrosine degradation gene cluster that mediates the biosynthesis of the brownish pigment pyomelanin as an alternative melanin. The 4-hydroxyphenylpyruvate dioxygenase hppD catalyzes the conversion of 4-hydroxyphenylpyruvate to homogentisic acid (HGA). The protein hmgX is crucial for this conversion and thus, probably functions as an accessory factor to mediate specific activity of hppD. The homogentisate 1,2-dioxygenase hmgA is then involved in the cleavage of the aromatic ring of HGA and its conversion to 4-maleylacetoacetate. When hmgA activity is lowered by the cell wall integrity (CWI) signaling pathway, HGA accumulates and leads to the production of pyomelanin through benzoquinone acetic acid after oxidation and polymerization. On the opposite, in non-stress conditions, both hppD and hmgA activities are balanced and HGA is degraded into 4-maleylacetoacetate. 4-maleylacetoacetate is further converted to 4-fumarylacetoacetate by the maleylacetoacetate isomerase maiA, which is degraded into fumarate and acetoacetate by the fumarylacetoacetase fahA. The sequence is that of L-tyrosine degradation gene cluster protein hmgX from Aspergillus fumigatus (strain ATCC MYA-4609 / CBS 101355 / FGSC A1100 / Af293) (Neosartorya fumigata).